A 153-amino-acid chain; its full sequence is Endoribonuclease YbeY (153 aa).

Zn(2+)-binding residues include His-114, His-118, and His-124.

Belongs to the endoribonuclease YbeY family. Zn(2+) is required as a cofactor.

Its subcellular location is the cytoplasm. In terms of biological role, single strand-specific metallo-endoribonuclease involved in late-stage 70S ribosome quality control and in maturation of the 3' terminus of the 16S rRNA. The sequence is that of Endoribonuclease YbeY from Shewanella denitrificans (strain OS217 / ATCC BAA-1090 / DSM 15013).